The following is a 420-amino-acid chain: Tyrosine--tRNA ligase (420 aa).

Y33 is a binding site for L-tyrosine. Residues 38-47 (PTADSLHIGH) carry the 'HIGH' region motif. L-tyrosine-binding residues include Y168 and Q172. The 'KMSKS' region motif lies at 231–235 (KFGKT). An ATP-binding site is contributed by K234. One can recognise an S4 RNA-binding domain in the interval 353-419 (MLLVDALIKV…GKKNYYLVKL (67 aa)).

It belongs to the class-I aminoacyl-tRNA synthetase family. TyrS type 1 subfamily. In terms of assembly, homodimer.

It is found in the cytoplasm. The enzyme catalyses tRNA(Tyr) + L-tyrosine + ATP = L-tyrosyl-tRNA(Tyr) + AMP + diphosphate + H(+). Its function is as follows. Catalyzes the attachment of tyrosine to tRNA(Tyr) in a two-step reaction: tyrosine is first activated by ATP to form Tyr-AMP and then transferred to the acceptor end of tRNA(Tyr). This is Tyrosine--tRNA ligase from Desulfitobacterium hafniense (strain Y51).